A 1034-amino-acid polypeptide reads, in one-letter code: Presequence protease, mitochondrial (1034 aa).

A mitochondrion-targeting transit peptide spans Met-1 to Ser-29. His-128 is a Zn(2+) binding site. Residue Glu-131 is the Proton acceptor of the active site. Zn(2+) is bound by residues His-132 and Glu-229.

This sequence belongs to the peptidase M16 family. PreP subfamily. As to quaternary structure, homodimer. Zn(2+) is required as a cofactor.

Its subcellular location is the mitochondrion. In terms of biological role, ATP-independent protease that degrades mitochondrial transit peptides after their cleavage. Also degrades other unstructured peptides. The chain is Presequence protease, mitochondrial from Drosophila melanogaster (Fruit fly).